A 339-amino-acid polypeptide reads, in one-letter code: tRNA N6-adenosine threonylcarbamoyltransferase (339 aa).

Residues His111 and His115 each contribute to the Fe cation site. Residues 134–138, Asp167, Gly180, and Asn272 each bind substrate; that span reads LVSGG. Fe cation is bound at residue Asp300.

The protein belongs to the KAE1 / TsaD family. Requires Fe(2+) as cofactor.

It localises to the cytoplasm. The enzyme catalyses L-threonylcarbamoyladenylate + adenosine(37) in tRNA = N(6)-L-threonylcarbamoyladenosine(37) in tRNA + AMP + H(+). Functionally, required for the formation of a threonylcarbamoyl group on adenosine at position 37 (t(6)A37) in tRNAs that read codons beginning with adenine. Is involved in the transfer of the threonylcarbamoyl moiety of threonylcarbamoyl-AMP (TC-AMP) to the N6 group of A37, together with TsaE and TsaB. TsaD likely plays a direct catalytic role in this reaction. In Vibrio cholerae serotype O1 (strain ATCC 39541 / Classical Ogawa 395 / O395), this protein is tRNA N6-adenosine threonylcarbamoyltransferase.